Reading from the N-terminus, the 101-residue chain is MAKVSMVERERKRQKTVRRFAAKREALKAIINSVDATQQERFEAQLKLQKLPRDSSPVRGRNRCRVTGRPRGYYRKFGLGRNKLREAAMNGEIPGLVKSSW.

The protein belongs to the universal ribosomal protein uS14 family. Part of the 30S ribosomal subunit. Contacts proteins S3 and S10.

Its function is as follows. Binds 16S rRNA, required for the assembly of 30S particles and may also be responsible for determining the conformation of the 16S rRNA at the A site. The sequence is that of Small ribosomal subunit protein uS14 from Alkalilimnicola ehrlichii (strain ATCC BAA-1101 / DSM 17681 / MLHE-1).